Consider the following 125-residue polypeptide: Large ribosomal subunit protein bL19 (125 aa).

It belongs to the bacterial ribosomal protein bL19 family.

In terms of biological role, this protein is located at the 30S-50S ribosomal subunit interface and may play a role in the structure and function of the aminoacyl-tRNA binding site. The chain is Large ribosomal subunit protein bL19 from Ehrlichia chaffeensis (strain ATCC CRL-10679 / Arkansas).